The following is a 249-amino-acid chain: tRNA uridine(34) hydroxylase (249 aa).

The 95-residue stretch at 124 to 218 (TKQDVIVIDT…YLEDTQNKNN (95 aa)) folds into the Rhodanese domain. C178 acts as the Cysteine persulfide intermediate in catalysis.

Belongs to the TrhO family.

It carries out the reaction uridine(34) in tRNA + AH2 + O2 = 5-hydroxyuridine(34) in tRNA + A + H2O. Catalyzes oxygen-dependent 5-hydroxyuridine (ho5U) modification at position 34 in tRNAs. This Rickettsia canadensis (strain McKiel) protein is tRNA uridine(34) hydroxylase.